A 399-amino-acid chain; its full sequence is S-adenosylmethionine synthase (399 aa).

ATP is bound at residue Gly-136–Asp-141.

Belongs to the AdoMet synthase 2 family. The cofactor is Mg(2+).

The enzyme catalyses L-methionine + ATP + H2O = S-adenosyl-L-methionine + phosphate + diphosphate. It functions in the pathway amino-acid biosynthesis; S-adenosyl-L-methionine biosynthesis; S-adenosyl-L-methionine from L-methionine: step 1/1. In terms of biological role, catalyzes the formation of S-adenosylmethionine from methionine and ATP. The sequence is that of S-adenosylmethionine synthase from Methanothrix thermoacetophila (strain DSM 6194 / JCM 14653 / NBRC 101360 / PT) (Methanosaeta thermophila).